Here is a 298-residue protein sequence, read N- to C-terminus: tRNA pseudouridine synthase-like 1 (298 aa).

Asp60 (nucleophile) is an active-site residue. Tyr124 contacts substrate.

The protein belongs to the tRNA pseudouridine synthase TruA family.

The enzyme catalyses a uridine in tRNA = a pseudouridine in tRNA. The chain is tRNA pseudouridine synthase-like 1 (pusl1) from Xenopus laevis (African clawed frog).